A 23-amino-acid polypeptide reads, in one-letter code: Coenzyme PQQ synthesis protein A (23 aa).

The segment at residues 15-19 (EVTLY) is a cross-link (pyrroloquinoline quinone (Glu-Tyr)).

It belongs to the PqqA family.

It participates in cofactor biosynthesis; pyrroloquinoline quinone biosynthesis. Functionally, required for coenzyme pyrroloquinoline quinone (PQQ) biosynthesis. PQQ is probably formed by cross-linking a specific glutamate to a specific tyrosine residue and excising these residues from the peptide. This Klebsiella pneumoniae (strain 342) protein is Coenzyme PQQ synthesis protein A.